Consider the following 46-residue polypeptide: Photosystem II reaction center protein K (46 aa).

The propeptide occupies M1 to A9. Residues L25 to F45 traverse the membrane as a helical segment.

It belongs to the PsbK family. In terms of assembly, PSII is composed of 1 copy each of membrane proteins PsbA, PsbB, PsbC, PsbD, PsbE, PsbF, PsbH, PsbI, PsbJ, PsbK, PsbL, PsbM, PsbT, PsbX, PsbY, Psb30/Ycf12, peripheral proteins PsbO, CyanoQ (PsbQ), PsbU, PsbV and a large number of cofactors. It forms dimeric complexes.

The protein resides in the cellular thylakoid membrane. In terms of biological role, one of the components of the core complex of photosystem II (PSII). PSII is a light-driven water:plastoquinone oxidoreductase that uses light energy to abstract electrons from H(2)O, generating O(2) and a proton gradient subsequently used for ATP formation. It consists of a core antenna complex that captures photons, and an electron transfer chain that converts photonic excitation into a charge separation. The chain is Photosystem II reaction center protein K from Prochlorococcus marinus (strain MIT 9515).